We begin with the raw amino-acid sequence, 287 residues long: Complement C1q-like protein 2 (287 aa).

A signal peptide spans 1–21 (MALGLLIAVPLLLQAAPPGAA). The tract at residues 65–144 (LSANPPPPFI…GTGGGGDTEG (80 aa)) is disordered. The 43-residue stretch at 76–118 (GPKGDPGRPGKPGPRGPPGEPGPPGPRGPPGEKGDSGRPGLPG) folds into the Collagen-like domain. A compositionally biased stretch (pro residues) spans 84–104 (PGKPGPRGPPGEPGPPGPRGP). Residues 127–141 (GGVGVVSGGTGGGGD) are compositionally biased toward gly residues. Residues 154–287 (FSGPKIAFYV…TFSGFLLYPD (134 aa)) enclose the C1q domain.

In terms of assembly, forms homotrimers which can further assemble to form higher-order oligomeric complexes. Interacts with ADGRB3. May interact with ERFE. Forms heterooligomers with C1QL3 and C1QL4, when proteins are coexpressed; this interaction does not occur after secretion. Post-translationally, glycosylated, but not with N-linked glycans. In terms of tissue distribution, highest expression in eye, followed by placenta and brain, intermediate expression in adipose tissue and lowest expression in lymph node and testis.

The protein resides in the secreted. Its function is as follows. May regulate the number of excitatory synapses that are formed on hippocampus neurons. Has no effect on inhibitory synapses. The polypeptide is Complement C1q-like protein 2 (C1ql2) (Mus musculus (Mouse)).